The following is a 747-amino-acid chain: Mediator of RNA polymerase II transcription subunit 25 (747 aa).

The tract at residues 1 to 226 (MVPGSEGPAR…PRHMVLVRGL (226 aa)) is interaction with the Mediator complex. Disordered regions lie at residues 233 to 274 (GSAP…QYQV) and 299 to 390 (LGPR…PALG). Pro residues-rich tracts occupy residues 263–272 (QPLPPVPPQY) and 326–342 (PQLPPGPPGAPKPPPAS). The interval 389–543 (LGGQQSVSNK…VNGIRQVITN (155 aa)) is interaction with VP16. The interaction with CREBBP stretch occupies residues 395–545 (VSNKLLAWSG…GIRQVITNHK (151 aa)). The interval 548 to 747 (QQQKLEQQQR…MEDDILMDLI (200 aa)) is disordered. Interaction with RARA regions lie at residues 564–653 (APPG…LLNP) and 640–707 (PGAN…WPAQ). A compositionally biased stretch (low complexity) spans 598 to 611 (ASGATGQPQPQGTA). A compositionally biased stretch (pro residues) spans 612–634 (QPPPGAPQGPPGAASGPPPPGPI). Residues 646–650 (LRSLL) carry the LXXLL motif motif. Pro residues-rich tracts occupy residues 652 to 664 (NPPPPQTGVPPPQ), 673 to 683 (PGAPALLPPPH), and 691 to 713 (LGPPLLHPPPAQSWPAQLPPRAP). At R725 the chain carries Asymmetric dimethylarginine. A compositionally biased stretch (acidic residues) spans 738 to 747 (MEDDILMDLI).

It belongs to the Mediator complex subunit 25 family. As to quaternary structure, component of the Mediator complex, which is composed of MED1, MED4, MED6, MED7, MED8, MED9, MED10, MED11, MED12, MED13, MED13L, MED14, MED15, MED16, MED17, MED18, MED19, MED20, MED21, MED22, MED23, MED24, MED25, MED26, MED27, MED29, MED30, MED31, CCNC, CDK8 and CDC2L6/CDK11. The MED12, MED13, CCNC and CDK8 subunits form a distinct module termed the CDK8 module. Mediator containing the CDK8 module is less active than Mediator lacking this module in supporting transcriptional activation. Individual preparations of the Mediator complex lacking one or more distinct subunits have been variously termed ARC, CRSP, DRIP, PC2, SMCC and TRAP. Interacts with CREBBP. Interacts with ESR1, GR, RARA, RXRA and THRB in a ligand-dependent fashion. Binds the Herpes simplex virus activator VP16. Ubiquitously expressed. Highest levels in brain, heart, kidney, peripheral leukocytes, placenta, skeletal muscle and spleen.

Its subcellular location is the nucleus. Component of the Mediator complex, a coactivator involved in the regulated transcription of nearly all RNA polymerase II-dependent genes. Mediator functions as a bridge to convey information from gene-specific regulatory proteins to the basal RNA polymerase II transcription machinery. Mediator is recruited to promoters by direct interactions with regulatory proteins and serves as a scaffold for the assembly of a functional preinitiation complex with RNA polymerase II and the general transcription factors. Required for RARA/RXRA-mediated transcription. The chain is Mediator of RNA polymerase II transcription subunit 25 (MED25) from Homo sapiens (Human).